Reading from the N-terminus, the 364-residue chain is Urease accessory protein UreD (364 aa).

Disordered regions lie at residues 1 to 37 and 201 to 250; these read MDQDRSGAADAGNPDPGRGPAGSAEARNGAAAASSPA and PPEV…AGER. Composition is skewed to low complexity over residues 21 to 37, 209 to 218, and 236 to 248; these read AGSAEARNGAAAASSPA, APDRGAPAAE, and AASSGGTGAAPAG.

This sequence belongs to the UreD family. UreD, UreF and UreG form a complex that acts as a GTP-hydrolysis-dependent molecular chaperone, activating the urease apoprotein by helping to assemble the nickel containing metallocenter of UreC. The UreE protein probably delivers the nickel.

Its subcellular location is the cytoplasm. In terms of biological role, required for maturation of urease via the functional incorporation of the urease nickel metallocenter. The chain is Urease accessory protein UreD from Kocuria rhizophila (strain ATCC 9341 / DSM 348 / NBRC 103217 / DC2201).